The chain runs to 95 residues: Large ribosomal subunit protein bL25 (95 aa).

It belongs to the bacterial ribosomal protein bL25 family. In terms of assembly, part of the 50S ribosomal subunit; part of the 5S rRNA/L5/L18/L25 subcomplex. Contacts the 5S rRNA. Binds to the 5S rRNA independently of L5 and L18.

Functionally, this is one of the proteins that binds to the 5S RNA in the ribosome where it forms part of the central protuberance. The sequence is that of Large ribosomal subunit protein bL25 from Shewanella halifaxensis (strain HAW-EB4).